The following is a 32-amino-acid chain: Cytochrome b6-f complex subunit 6 (32 aa).

A helical transmembrane segment spans residues 4–26 (ITSYVGLLFTALGFTLGLYFGLT).

This sequence belongs to the PetL family. In terms of assembly, the 4 large subunits of the cytochrome b6-f complex are cytochrome b6, subunit IV (17 kDa polypeptide, PetD), cytochrome f and the Rieske protein, while the 4 small subunits are PetG, PetL, PetM and PetN. The complex functions as a dimer.

The protein resides in the plastid. The protein localises to the chloroplast thylakoid membrane. Functionally, component of the cytochrome b6-f complex, which mediates electron transfer between photosystem II (PSII) and photosystem I (PSI), cyclic electron flow around PSI, and state transitions. PetL is important for photoautotrophic growth as well as for electron transfer efficiency and stability of the cytochrome b6-f complex. The chain is Cytochrome b6-f complex subunit 6 from Tetradesmus obliquus (Green alga).